The chain runs to 387 residues: Succinate--CoA ligase [ADP-forming] subunit beta (387 aa).

The 228-residue stretch at 9-236 (KELFAKHNVP…RAATDPLELK (228 aa)) folds into the ATP-grasp domain. ATP contacts are provided by residues Lys-45, 52-54 (GRG), Ser-94, and Glu-99. Mg(2+) is bound by residues Asn-191 and Asp-205. Substrate contacts are provided by residues Asn-256 and 318–320 (GIT).

Belongs to the succinate/malate CoA ligase beta subunit family. As to quaternary structure, heterotetramer of two alpha and two beta subunits. Mg(2+) is required as a cofactor.

It catalyses the reaction succinate + ATP + CoA = succinyl-CoA + ADP + phosphate. It carries out the reaction GTP + succinate + CoA = succinyl-CoA + GDP + phosphate. It functions in the pathway carbohydrate metabolism; tricarboxylic acid cycle; succinate from succinyl-CoA (ligase route): step 1/1. Its function is as follows. Succinyl-CoA synthetase functions in the citric acid cycle (TCA), coupling the hydrolysis of succinyl-CoA to the synthesis of either ATP or GTP and thus represents the only step of substrate-level phosphorylation in the TCA. The beta subunit provides nucleotide specificity of the enzyme and binds the substrate succinate, while the binding sites for coenzyme A and phosphate are found in the alpha subunit. The sequence is that of Succinate--CoA ligase [ADP-forming] subunit beta from Mycobacterium bovis (strain ATCC BAA-935 / AF2122/97).